A 251-amino-acid chain; its full sequence is 14-3-3-like protein (251 aa).

The protein belongs to the 14-3-3 family.

The protein is 14-3-3-like protein of Fucus vesiculosus (Bladder wrack).